The chain runs to 195 residues: Imidazoleglycerol-phosphate dehydratase (195 aa).

This sequence belongs to the imidazoleglycerol-phosphate dehydratase family.

The protein resides in the cytoplasm. It carries out the reaction D-erythro-1-(imidazol-4-yl)glycerol 3-phosphate = 3-(imidazol-4-yl)-2-oxopropyl phosphate + H2O. It functions in the pathway amino-acid biosynthesis; L-histidine biosynthesis; L-histidine from 5-phospho-alpha-D-ribose 1-diphosphate: step 6/9. This Methylobacterium radiotolerans (strain ATCC 27329 / DSM 1819 / JCM 2831 / NBRC 15690 / NCIMB 10815 / 0-1) protein is Imidazoleglycerol-phosphate dehydratase.